The chain runs to 1181 residues: MAKRGYKLQEFLAHSANVNCLSIGKKTSRLFITGGDDYKVNLWAIGKPTSLMSLCGHTSAVDSVAFDSAEVLVLAGASSGVIKLWDVEEAKMVRAFTGHRSNCSAVEFHPFGEFLASGSSDANLKIWDIRKKGCIQTYKGHSRGISTIRFTPDGRWVVSGGLDNVVKVWDLTAGKLLHEFKFHEGPIRSLDFHPLEFLLATGSADRTVKFWDLETFELIGSTRPEATGVRSIKFHPDGRTLFCGLDDSLKVYSWEPVVCHDGVDMGWSTLGDLCISEGKLLGCSYYQNSVGIWVSDISQIEPYGIGSADKKECVEKILSALDDQSFDRIKSTPRRSSSPDYETKEIKNIYIDSTGGNSAVAHKSGSLSTPATSTGQAGDNKSLVVHSVVPRDSDIGKDSSDSGKESITFSKTKPGMLLRPAYVRKTPTKFDETKKQSVAVGYLKKSGLDGEKKLDTETAFDSEMSGRNPYDADDSIIKSITNKFEQALLPESPTDEAKCMLLKPPRVQRSPSTKYNEARWATSTDSGALDSKKNGLESSRDMDLPTGLRDDRGSNPCEEDIENKSISSRSERVLSPEKAGDELKSLESPGGSKESKSVKVVRGVKVVSGRTRSLVERFERGEKITHSEDKAASATVVHSSNSVEEEPLTASVQTVSMMPTQVMPVKLDQATNSTTVDVPVLSTRRTKSTPVRVMPVVLGRDTSMATDTPPVTSTRPDRTSATNLTSDVSGVTSKRQTRTSPAPVMPMILNQTTKMKSDEPSITSTWPDRTSATDLTSDVSGVISSRQTRTSPAPVMPMKLNQKTKIKSDEPPITSTRPDRPSATNLTSDESPVTSTRQAKTSPAPVTPVILNQRQTTNMKSDEPPVISTRPLRTSSARVMPVILNQASTTYDERPLSSSRSARTSPARIMPMKLNQADNMPSYEPPVALTRSARNSPARVIPVKLNQATNVTADASHIRSRQRFSPTQTLATPAVFDQVTDMTLDETTKTQQSSDILTQKEEPQISGREDDGDIWEILMRTHSEVLNTLQSRLTKLQIVRHFWERSDIKGAIAALRKLSDHSVQADVINILTDKTEILTLDLFSQLAPVLTGLLGSKTERPVNVSLEMLLKLVAVFGTVIQSTVSARRVVGVDLHAEERLQICQSCSAELQKVQKILPLLTRRGGLIARKAQELNLVLQTP.

7 WD repeats span residues 13–53 (AHSA…SLMS), 56–95 (GHTS…MVRA), 98–137 (GHRS…CIQT), 140–181 (GHSR…HEFK), 183–221 (HEGP…LIGS), 224–264 (PEAT…DGVD), and 266–303 (GWST…IEPY). The DWD box motif lies at 114-130 (FLASGSSDANLKIWDIR). Disordered regions lie at residues 361-383 (AHKS…NKSL), 503-597 (KPPR…ESKS), 702-739 (TSMA…QTRT), 754-869 (KMKS…VIST), and 988-1008 (TKTQ…ISGR). 2 stretches are compositionally biased toward polar residues: residues 365–379 (GSLS…QAGD) and 509–526 (RSPS…STDS). Basic and acidic residues-rich tracts occupy residues 530-553 (DSKK…DDRG) and 569-585 (RSER…ELKS). Composition is skewed to polar residues over residues 703–739 (SMAT…QTRT), 754–791 (KMKS…TRTS), 822–841 (SATN…QAKT), and 850–859 (ILNQRQTTNM). The span at 998-1008 (TQKEEPQISGR) shows a compositional bias: basic and acidic residues.

It belongs to the WD repeat KATNB1 family. Component of KTN80-KTN1 complexes composed of a hexamer of KTN1-KTN80 heterodimers that sense microtubule (MT) geometry to confer precise MT severing. Interacts directly with AAA1/KTN1. Interacts with subunits of the CUL4-based E3 ligase complex DDB1A and DDB1B. As to expression, expressed at low levels in siliques, flowers, leaves, stems and roots.

It localises to the cytoplasm. The protein localises to the cytoskeleton. Its function is as follows. May participate in a complex which severs microtubules in an ATP-dependent manner. Microtubule severing may promote rapid reorganization of cellular microtubule arrays. Confers precision to microtubule (MT) severing by specific targeting of KTN1 to MT cleavage sites such as crossover or branching nucleation sites. Together with other KTN80s, regulates cell elongation by modulating MT organization. Negative regulator of abscisic acid (ABA) responses. May function as a substrate receptor for cullin-RING ubiquitin ligase 4 complexes (CRL4), a family of E3 ligases involved in protein degradation. The polypeptide is Katanin p80 WD40 repeat-containing subunit B1 homolog KTN80.2 (Arabidopsis thaliana (Mouse-ear cress)).